Here is a 93-residue protein sequence, read N- to C-terminus: RNA silencing suppressor (93 aa).

Residues 44 to 47 (CKRR) form a basic region. The segment at 54 to 69 (CWRCYRVYPPVCNSKC) adopts a C4-type zinc-finger fold.

Belongs to the carlaviruses nucleic acid-binding protein family.

Suppressor of viral-induced RNA silencing. The potential mechanism of action is based on sequestering siRNAs. This Solanum tuberosum (Potato) protein is RNA silencing suppressor.